The chain runs to 241 residues: DnaA regulatory inactivator Hda (241 aa).

It belongs to the DnaA family. HdA subfamily. As to quaternary structure, the active form seems to be an ADP-bound monomer. Forms the RIDA complex (regulatory inactivation of DnaA) of ATP-DnaA, ADP-Hda and the DNA-loaded beta sliding clamp (dnaN).

Mediates the interaction of DNA replication initiator protein DnaA with DNA polymerase subunit beta sliding clamp (dnaN). Stimulates hydrolysis of ATP-DnaA to ADP-DnaA, rendering DnaA inactive for reinitiation, a process called regulatory inhibition of DnaA or RIDA. The sequence is that of DnaA regulatory inactivator Hda from Salmonella paratyphi A (strain ATCC 9150 / SARB42).